Here is a 412-residue protein sequence, read N- to C-terminus: Subtilisin-like protease 6 (412 aa).

The first 20 residues, 1-20, serve as a signal peptide directing secretion; the sequence is MGFITKAIPIVLAALSTVNG. Residues 21-127 constitute a propeptide that is removed on maturation; that stretch reads AKILEAGPHA…VRTSTNGTNL (107 aa). An Inhibitor I9 domain is found at 36 to 120; it reads KYIVVMKREV…YIEPDFVVRT (85 aa). N-linked (GlcNAc...) asparagine glycans are attached at residues N123 and N126. Positions 135–412 constitute a Peptidase S8 domain; sequence SWGLARVSSK…SKLIYNGSGK (278 aa). Catalysis depends on charge relay system residues D167 and H198. 2 N-linked (GlcNAc...) asparagine glycosylation sites follow: N252 and N264. S358 acts as the Charge relay system in catalysis. A glycan (N-linked (GlcNAc...) asparagine) is linked at N408.

It belongs to the peptidase S8 family.

It localises to the secreted. Its function is as follows. Secreted subtilisin-like serine protease with keratinolytic activity that contributes to pathogenicity. This chain is Subtilisin-like protease 6 (SUB6), found in Trichophyton tonsurans (Scalp ringworm fungus).